The primary structure comprises 536 residues: Solute carrier family 2, facilitated glucose transporter member 10 (536 aa).

At 1–15 (MGLRPAVLLLCASVS) the chain is on the cytoplasmic side. Residues 16-36 (LLGGLTFGYELAVISGALLPL) form a helical membrane-spanning segment. Over 37 to 48 (QLNFGLSCLEQE) the chain is Extracellular. Residues 49–69 (LLVGSLLLGALLASLVGGFLI) traverse the membrane as a helical segment. At 70-82 (DCYGRRRAILGSN) the chain is on the cytoplasmic side. The chain crosses the membrane as a helical span at residues 83–103 (AVLLAGSLILGLASSLPWLLL). The Extracellular portion of the chain corresponds to 104-107 (GRLS). The chain crosses the membrane as a helical span at residues 108–128 (VGFAISLSSMACCIYVSELVG). Residues 129 to 132 (PRQR) lie on the Cytoplasmic side of the membrane. The chain crosses the membrane as a helical span at residues 133-153 (GVLVSLYEVGITVGILFSYGL). Residues 154–166 (NYVLAGSPWGWRH) lie on the Extracellular side of the membrane. The helical transmembrane segment at 167 to 187 (MFGWAAAPALLQSLSLFLLPA) threads the bilayer. Over 188–232 (GAEGTAAPKDLIPLQGRETSKPGLVKPQYSFLDLFRAQDGMWSRT) the chain is Cytoplasmic. Residues 233–253 (VVGLGLVLFQQLTGQPNVLYY) traverse the membrane as a helical segment. 242–243 (QQ) contributes to the D-glucose binding site. The Extracellular portion of the chain corresponds to 254–269 (ASTIFRSVGFHGGSSA). A helical transmembrane segment spans residues 270–290 (VLASVGLGTVKVAATLVATGL). At 291 to 298 (VDRAGRRV) the chain is on the cytoplasmic side. Residues 299 to 319 (LLLFGCALMALSVSGIGLVSF) traverse the membrane as a helical segment. Residues 320 to 402 (AVSLDSGPSC…VPTSPILEHT (83 aa)) are Extracellular-facing. Residues 403–423 (LLCWSALVCMMVYVSAFSVGF) form a helical membrane-spanning segment. Topologically, residues 424 to 442 (GPVTWLVLSEIYPAEIRGR) are cytoplasmic. Residue Trp-428 participates in D-glucose binding. A helical transmembrane segment spans residues 443-463 (AFAFCSSFNWAANLFISLSFL). The Extracellular segment spans residues 464–468 (DLIGA). The chain crosses the membrane as a helical span at residues 469-489 (IGLAWTFLLYGLTAVLGLAFI). At 490 to 536 (YLLVPETKGQSLAEIEQQFQTSRFPLNFGHRQRIGIQYHRLDVSSAS) the chain is on the cytoplasmic side.

This sequence belongs to the major facilitator superfamily. Sugar transporter (TC 2.A.1.1) family. Glucose transporter subfamily.

Its subcellular location is the endomembrane system. It is found in the cytoplasm. The protein localises to the perinuclear region. It carries out the reaction D-glucose(out) = D-glucose(in). In terms of biological role, facilitative glucose transporter required for the development of the cardiovascular system. The protein is Solute carrier family 2, facilitated glucose transporter member 10 of Mus musculus (Mouse).